Here is a 276-residue protein sequence, read N- to C-terminus: MQNDPIGLMDSGVGGLTVLKEVQRLLPTENTVFLGDQARLPYGPRSVAEVTMFTKQIAQFLRQQAGIKALVIACNTATAAALTTMQQTLPIPVIGVIAPGAQAAVQTTRNHRIGVIATAGTVKSDQYRRDILAAAPNSQIFSVACPEMVTLAEQNDLTTTHARSVVAANLASLMDKKIDTLVMGCTHFPLLRSAIQHAVGSQVTLVDPGLATAEQTAAILKTHGLLNPATTRGTAQFFTTGETAHFDTLASQWLDQQPMPAKHVSIAQLTTPMEVN.

Substrate is bound by residues Asp10–Ser11 and Tyr42–Gly43. Cys74 acts as the Proton donor/acceptor in catalysis. Substrate is bound at residue Asn75–Thr76. The active-site Proton donor/acceptor is Cys185. A substrate-binding site is contributed by Thr186 to His187.

This sequence belongs to the aspartate/glutamate racemases family.

The catalysed reaction is L-glutamate = D-glutamate. It functions in the pathway cell wall biogenesis; peptidoglycan biosynthesis. Functionally, provides the (R)-glutamate required for cell wall biosynthesis. This chain is Glutamate racemase, found in Levilactobacillus brevis (strain ATCC 367 / BCRC 12310 / CIP 105137 / JCM 1170 / LMG 11437 / NCIMB 947 / NCTC 947) (Lactobacillus brevis).